A 287-amino-acid polypeptide reads, in one-letter code: Eukaryotic translation initiation factor 3 subunit F (287 aa).

The MPN domain occupies 12–142; the sequence is VRVHPVVLFQ…IKAYVCVSLG (131 aa).

Belongs to the eIF-3 subunit F family. As to quaternary structure, component of the eukaryotic translation initiation factor 3 (eIF-3) complex.

Its subcellular location is the cytoplasm. Its function is as follows. Component of the eukaryotic translation initiation factor 3 (eIF-3) complex, which is involved in protein synthesis of a specialized repertoire of mRNAs and, together with other initiation factors, stimulates binding of mRNA and methionyl-tRNAi to the 40S ribosome. The eIF-3 complex specifically targets and initiates translation of a subset of mRNAs involved in cell proliferation. This chain is Eukaryotic translation initiation factor 3 subunit F, found in Aedes aegypti (Yellowfever mosquito).